The chain runs to 403 residues: 3-(3-hydroxy-phenyl)propionate transporter (403 aa).

Residues 1 to 16 (MSTRTPSSSSSRLMLT) are Cytoplasmic-facing. A helical membrane pass occupies residues 17–37 (IGLCFLVALMEGLDLQAAGIA). Topologically, residues 38-53 (AGGIAQAFALDKMQMG) are periplasmic. A helical membrane pass occupies residues 54 to 74 (WIFSAGILGLLPGALVGGMLA). Over 75–81 (DRYGRKR) the chain is Cytoplasmic. The chain crosses the membrane as a helical span at residues 82 to 102 (ILIGSVALFGLFSLATAIAWD). Residues 103–105 (FPS) lie on the Periplasmic side of the membrane. A helical transmembrane segment spans residues 106 to 126 (LVFARLMTGVGLGAALPNLIA). The Cytoplasmic segment spans residues 127–142 (LTSEAAGPRFRGTAVS). A helical transmembrane segment spans residues 143 to 163 (LMYCGVPIGAALAATLGFAGA). Asn-164 is a topological domain (periplasmic). A helical transmembrane segment spans residues 165–185 (LAWQTVFWVGGVVPLILVPLL). Residues 186–217 (MRWLPESAVFAGEKQSAPPLRALFAPETATAT) lie on the Cytoplasmic side of the membrane. The chain crosses the membrane as a helical span at residues 218–238 (LLLWLCYFFTLLVVYMLINWL). Over 239-253 (PLLLVEQGFQPSQAA) the chain is Periplasmic. The helical transmembrane segment at 254–274 (GVMFALQMGAASGTLMLGALM) threads the bilayer. The Cytoplasmic segment spans residues 275-279 (DKLRP). The chain crosses the membrane as a helical span at residues 280 to 300 (VTMSLLIYSGMLASLLALGTV). Residues 301 to 306 (SSFNGM) lie on the Periplasmic side of the membrane. The chain crosses the membrane as a helical span at residues 307–327 (LLAGFVAGLFATGGQSVLYAL). Over 328–339 (APLFYSSQIRAT) the chain is Cytoplasmic. Residues 340–360 (GVGTAVAVGRLGAMSGPLLAG) form a helical membrane-spanning segment. Residues 361-369 (KMLALGTGT) lie on the Periplasmic side of the membrane. The helical transmembrane segment at 370-390 (VGVMAASAPGILVAGLAVFIL) threads the bilayer. Residues 391-403 (MSRRSRIQPCADA) lie on the Cytoplasmic side of the membrane.

It belongs to the major facilitator superfamily. Aromatic acid:H(+) symporter (AAHS) (TC 2.A.1.15) family.

It is found in the cell inner membrane. It catalyses the reaction 3-(3-hydroxyphenyl)propanoate(in) + H(+)(in) = 3-(3-hydroxyphenyl)propanoate(out) + H(+)(out). With respect to regulation, inhibited by carbonyl cyanide m-chlorophenylhydrazone (CCCP), which dissipates the proton motive force. Its function is as follows. Uptake of 3-(3-hydroxyphenyl)propionate (3HPP) across the cytoplasmic membrane. Transport is driven by the proton motive force. Does not transport benzoate, 3-hydroxybenzoate or gentisate. This chain is 3-(3-hydroxy-phenyl)propionate transporter, found in Escherichia coli (strain K12).